Consider the following 426-residue polypeptide: Glutamate-1-semialdehyde 2,1-aminomutase (426 aa).

N6-(pyridoxal phosphate)lysine is present on lysine 265.

This sequence belongs to the class-III pyridoxal-phosphate-dependent aminotransferase family. HemL subfamily. In terms of assembly, homodimer. Pyridoxal 5'-phosphate is required as a cofactor.

It localises to the cytoplasm. The catalysed reaction is (S)-4-amino-5-oxopentanoate = 5-aminolevulinate. The protein operates within porphyrin-containing compound metabolism; protoporphyrin-IX biosynthesis; 5-aminolevulinate from L-glutamyl-tRNA(Glu): step 2/2. This Salmonella gallinarum (strain 287/91 / NCTC 13346) protein is Glutamate-1-semialdehyde 2,1-aminomutase.